The chain runs to 543 residues: ATP-dependent ubiquitin transferase-like protein Cap2 (543 aa).

The segment at 1-159 is E2-like domain; sequence MSSAAAVADV…QNCIVAHANG (159 aa). The active-site For E2-like domain is Cys-84. The linker domain stretch occupies residues 160 to 305; sequence CPLWFITDNE…YLAQRNMPNS (146 aa). Residues 306–543 form an adenylation plus E1-like domain region; sequence KTLAGKNIAV…RDRECPLCNS (238 aa). Residues Cys-450 and Cys-453 each act as for E1-like domain in the active site.

In the C-terminal section; belongs to the HesA/MoeB/ThiF family. As to quaternary structure, forms a Cap2-CdnA complex. A Cap2 dimer is bound on either side by a CdnA monomer.

Functionally, CD-NTase priming component of a CBASS antiviral system. CBASS (cyclic oligonucleotide-based antiphage signaling system) provides immunity against bacteriophages. The CD-NTase protein (CdnA) synthesizes cyclic nucleotides in response to infection; these serve as specific second messenger signals. The signals activate a diverse range of effectors, leading to bacterial cell death and thus abortive phage infection. A type II-A(GA) CBASS system. In terms of biological role, acts as a protein transferase, conjugating CdnA, the CD-NTase, to unidentified target(s) in the cell probably via an E1-E2 ubiquitin transferase-like mechanism. This primes CdnA, upon phage infection CdnA activates and makes cyclic nucleotides. Protein conjugation requires ATP. Its function is as follows. The capV-cdnA-cap2-cap3 operon provides about 10(4)-fold protection in strain BWHPSA011 against infection by phage PaMx41. In P.aeruginosa strain PAO1 it confers protection against phages PaMx41 and JBD18 but not JBD67 (JBD18 and JBD67 do not replicate in BWHPSA011 / Pa011). When acb2 in JBD67 is deleted this CBASS operon then protects against JDB67 also. This CBASS system limits prophage induction of lysogenized JBD67 as well as viral lytic replication. This Pseudomonas aeruginosa (strain BWHPSA011 / Pa011) protein is ATP-dependent ubiquitin transferase-like protein Cap2.